Here is a 188-residue protein sequence, read N- to C-terminus: MATVGMNDVKNGMKILVNNEPAVITETEYVKPGKGQAFTRMKYRFIKSGRVVEMTMKATDDVEVADVVDTDMRYLYSDGEYWHFMDPETFEQVQTDKAGMGGADKWLKGEEDCIVTLWNGAPIWVQPPNFVELKITETDPGVRGDTSGGGGKPATLETGAVVRVPLFVNQDEIIKVDTRSGEYSARVK.

At K34 the chain carries N6-(3,6-diaminohexanoyl)-5-hydroxylysine.

Belongs to the elongation factor P family. In terms of processing, may be beta-lysylated on the epsilon-amino group of Lys-34 by the combined action of EpmA and EpmB, and then hydroxylated on the C5 position of the same residue by EpmC (if this protein is present). Lysylation is critical for the stimulatory effect of EF-P on peptide-bond formation. The lysylation moiety may extend toward the peptidyltransferase center and stabilize the terminal 3-CCA end of the tRNA. Hydroxylation of the C5 position on Lys-34 may allow additional potential stabilizing hydrogen-bond interactions with the P-tRNA.

The protein localises to the cytoplasm. Its pathway is protein biosynthesis; polypeptide chain elongation. Functionally, involved in peptide bond synthesis. Alleviates ribosome stalling that occurs when 3 or more consecutive Pro residues or the sequence PPG is present in a protein, possibly by augmenting the peptidyl transferase activity of the ribosome. Modification of Lys-34 is required for alleviation. The sequence is that of Elongation factor P from Xanthomonas oryzae pv. oryzae (strain MAFF 311018).